A 384-amino-acid polypeptide reads, in one-letter code: 8-amino-7-oxononanoate synthase (384 aa).

Arg21 provides a ligand contact to substrate. Position 108–109 (108–109 (GF)) interacts with pyridoxal 5'-phosphate. Residue His133 participates in substrate binding. 3 residues coordinate pyridoxal 5'-phosphate: Ser179, His207, and Thr233. Lys236 is subject to N6-(pyridoxal phosphate)lysine. Residue Thr352 participates in substrate binding.

It belongs to the class-II pyridoxal-phosphate-dependent aminotransferase family. BioF subfamily. As to quaternary structure, homodimer. Pyridoxal 5'-phosphate serves as cofactor.

The catalysed reaction is 6-carboxyhexanoyl-[ACP] + L-alanine + H(+) = (8S)-8-amino-7-oxononanoate + holo-[ACP] + CO2. It participates in cofactor biosynthesis; biotin biosynthesis. Functionally, catalyzes the decarboxylative condensation of pimeloyl-[acyl-carrier protein] and L-alanine to produce 8-amino-7-oxononanoate (AON), [acyl-carrier protein], and carbon dioxide. This Shigella boydii serotype 18 (strain CDC 3083-94 / BS512) protein is 8-amino-7-oxononanoate synthase.